The primary structure comprises 406 residues: DNA primase DnaG (406 aa).

In terms of domain architecture, Toprim spans 167–253; sequence DAVVIVEGRA…CVEDLSRRTV (87 aa). 3 residues coordinate Mg(2+): E173, D215, and D217. Residues 259-309 are disordered; that stretch reads NKTPASAAAPIATTQSETAATDGSATPAPTPEPAPDTAPSPDSDGDDTEAA. A compositionally biased stretch (low complexity) spans 261–272; the sequence is TPASAAAPIATT. A compositionally biased stretch (pro residues) spans 286–296; that stretch reads APTPEPAPDTA.

The protein belongs to the archaeal DnaG primase family. As to quaternary structure, forms a ternary complex with MCM helicase and DNA. The cofactor is Mg(2+).

It catalyses the reaction ssDNA + n NTP = ssDNA/pppN(pN)n-1 hybrid + (n-1) diphosphate.. RNA polymerase that catalyzes the synthesis of short RNA molecules used as primers for DNA polymerase during DNA replication. The polypeptide is DNA primase DnaG (Halobacterium salinarum (strain ATCC 29341 / DSM 671 / R1)).